Here is a 146-residue protein sequence, read N- to C-terminus: Shadow of prion protein (146 aa).

A signal peptide spans 1–24 (MRGTSAVCWSLLLLIALLSQNVTA). N-linked (GlcNAc...) asparagine glycosylation occurs at N94. The GPI-anchor amidated serine moiety is linked to residue S108. The propeptide at 109-146 (GTCPLSSHLSFRLIISIGAILTCSSSSIYVSTKINLGK) is removed in mature form.

This sequence belongs to the SPRN family.

It localises to the cell membrane. Its function is as follows. Prion-like protein that has PrP(C)-like neuroprotective activity. This is Shadow of prion protein (sprn) from Xenopus tropicalis (Western clawed frog).